The sequence spans 577 residues: Outer spore wall assembly protein SHE10 (577 aa).

The first 23 residues, 1-23 (MGKLIKLITTLTVLVSLLQYCCE), serve as a signal peptide directing secretion. 2 coiled-coil regions span residues 379–416 (NETRSTLDELTNAMEKDLSEITDEIEKKVNAIREENVE) and 513–561 (ILRS…EEDV). Basic and acidic residues predominate over residues 525 to 545 (RERKERERKEREKAAAEEFQR). A disordered region spans residues 525–577 (RERKERERKEREKAAAEEFQRQQELLLQQEEEDEEDVSYTSTSTITTTTTMTL). Residues 562–577 (SYTSTSTITTTTTMTL) are compositionally biased toward low complexity.

Belongs to the SHE10 family. As to quaternary structure, component of the mitochondria-localized RNase mitochondrial RNA-processing (RNase MRP) composed of one single RNA encoded by the NME1 gene and at least 31 proteins. Absent in the nucleus-localized RNase MRP (NuMRP).

The protein localises to the mitochondrion. Involved in spore wall assembly. May be a component of the mitochondrial RNase MRP (MtMRP), a ribonucleoprotein endoribonuclease involved in the cleaving RNA transcripts to generate primers for DNA replication in mitochondria. The chain is Outer spore wall assembly protein SHE10 from Saccharomyces cerevisiae (strain JAY291) (Baker's yeast).